The sequence spans 466 residues: A-type ATP synthase subunit B (466 aa).

The protein belongs to the ATPase alpha/beta chains family. Has multiple subunits with at least A(3), B(3), C, D, E, F, H, I and proteolipid K(x).

Its subcellular location is the cell membrane. In terms of biological role, component of the A-type ATP synthase that produces ATP from ADP in the presence of a proton gradient across the membrane. The B chain is a regulatory subunit. This chain is A-type ATP synthase subunit B, found in Sulfolobus acidocaldarius (strain ATCC 33909 / DSM 639 / JCM 8929 / NBRC 15157 / NCIMB 11770).